A 281-amino-acid chain; its full sequence is Feruloyl esterase A (281 aa).

An N-terminal signal peptide occupies residues 1 to 21 (MKQFSAKYALILLATAGQALA). Disulfide bonds link Cys50-Cys279, Cys112-Cys115, and Cys248-Cys255. Asp98 is a substrate binding site. A glycan (N-linked (GlcNAc...) asparagine) is linked at Asn100. Residue Tyr101 coordinates substrate. Ser154 functions as the Nucleophile in the catalytic mechanism. Asp215 acts as the Charge relay system in catalysis. Substrate is bound at residue His268. His268 serves as the catalytic Charge relay system.

Glycosylated.

Its subcellular location is the secreted. The catalysed reaction is feruloyl-polysaccharide + H2O = ferulate + polysaccharide.. Inhibited by the specific serine esterase inhibitor diisopropylfluorophosphate. Functionally, involved in degradation of plant cell walls. Hydrolyzes the feruloyl-arabinose ester bond in arabinoxylans, and the feruloyl-galactose ester bond in pectin. Binds to cellulose. This Aspergillus niger protein is Feruloyl esterase A (faeA).